A 176-amino-acid chain; its full sequence is Inner membrane-spanning protein YciB (176 aa).

5 helical membrane-spanning segments follow: residues Phe-3–Phe-23, Thr-49–His-69, Lys-72–Ala-92, Lys-118–Val-138, and Phe-149–Leu-169.

This sequence belongs to the YciB family.

The protein resides in the cell inner membrane. Its function is as follows. Plays a role in cell envelope biogenesis, maintenance of cell envelope integrity and membrane homeostasis. The chain is Inner membrane-spanning protein YciB from Burkholderia thailandensis (strain ATCC 700388 / DSM 13276 / CCUG 48851 / CIP 106301 / E264).